Reading from the N-terminus, the 214-residue chain is Non-structural protein NP-1 (214 aa).

Disordered stretches follow at residues 1–85 (MSSE…TRTN) and 192–214 (ESEE…NASN). Basic residues predominate over residues 33–43 (SRSRSPIRRHG). The segment covering 44–55 (EKNLEYAHHNNQ) has biased composition (basic and acidic residues). The segment covering 56 to 71 (DNRQSSYTASKTSDQA) has biased composition (polar residues). Residues 192–201 (ESEEVTDEEM) are compositionally biased toward acidic residues.

The protein belongs to the Bocaparvovirus Non-structural protein NP-1 family.

The protein resides in the host nucleus. In terms of biological role, required for the expression of the capsid proteins. Performs the splicing and internal polyadenylation of the viral capsid-encoding mRNA precursor, which allows its maturation and expression. Transactivates the viral promoter. This chain is Non-structural protein NP-1 (NP1), found in Human bocavirus 4 (HBoV4).